The following is a 99-amino-acid chain: Large ribosomal subunit protein eL21 (99 aa).

The span at Met-1–Lys-14 shows a compositional bias: polar residues. The interval Met-1–Glu-38 is disordered.

It belongs to the eukaryotic ribosomal protein eL21 family.

This is Large ribosomal subunit protein eL21 from Halobacterium salinarum (strain ATCC 29341 / DSM 671 / R1).